The primary structure comprises 447 residues: Tubulin beta chain (447 aa).

GTP is bound by residues glutamine 11, glutamate 69, serine 138, glycine 142, threonine 143, glycine 144, asparagine 204, and asparagine 226. A Mg(2+)-binding site is contributed by glutamate 69. Positions 424-447 are disordered; that stretch reads QYQEASVSEGEEEYDEEAPLEGEE. The span at 432–447 shows a compositional bias: acidic residues; the sequence is EGEEEYDEEAPLEGEE.

This sequence belongs to the tubulin family. In terms of assembly, dimer of alpha and beta chains. A typical microtubule is a hollow water-filled tube with an outer diameter of 25 nm and an inner diameter of 15 nM. Alpha-beta heterodimers associate head-to-tail to form protofilaments running lengthwise along the microtubule wall with the beta-tubulin subunit facing the microtubule plus end conferring a structural polarity. Microtubules usually have 13 protofilaments but different protofilament numbers can be found in some organisms and specialized cells. It depends on Mg(2+) as a cofactor.

Its subcellular location is the cytoplasm. It localises to the cytoskeleton. Its function is as follows. Tubulin is the major constituent of microtubules, a cylinder consisting of laterally associated linear protofilaments composed of alpha- and beta-tubulin heterodimers. Microtubules grow by the addition of GTP-tubulin dimers to the microtubule end, where a stabilizing cap forms. Below the cap, tubulin dimers are in GDP-bound state, owing to GTPase activity of alpha-tubulin. This Dothistroma septosporum (Red band needle blight fungus) protein is Tubulin beta chain (TUB1).